Here is a 351-residue protein sequence, read N- to C-terminus: uncharacterized protein (351 aa).

The first 32 residues, 1-32, serve as a signal peptide directing secretion; the sequence is MKNKKRVFIASSLSCVLLLLSAANTEANSANK. A disordered region spans residues 26-74; the sequence is EANSANKDSQDQTKKEHVDKAQQKEKRNVNDKDKNTPGPDDIGKNGKVT. Residues 33–60 are compositionally biased toward basic and acidic residues; that stretch reads DSQDQTKKEHVDKAQQKEKRNVNDKDKN.

This sequence belongs to the aerolysin family.

This is an uncharacterized protein from Staphylococcus aureus (strain MRSA252).